The sequence spans 173 residues: Crossover junction endodeoxyribonuclease RuvC (173 aa).

Residues aspartate 8, glutamate 67, and aspartate 139 contribute to the active site. Positions 8, 67, and 139 each coordinate Mg(2+).

It belongs to the RuvC family. As to quaternary structure, homodimer which binds Holliday junction (HJ) DNA. The HJ becomes 2-fold symmetrical on binding to RuvC with unstacked arms; it has a different conformation from HJ DNA in complex with RuvA. In the full resolvosome a probable DNA-RuvA(4)-RuvB(12)-RuvC(2) complex forms which resolves the HJ. The cofactor is Mg(2+).

It is found in the cytoplasm. It catalyses the reaction Endonucleolytic cleavage at a junction such as a reciprocal single-stranded crossover between two homologous DNA duplexes (Holliday junction).. In terms of biological role, the RuvA-RuvB-RuvC complex processes Holliday junction (HJ) DNA during genetic recombination and DNA repair. Endonuclease that resolves HJ intermediates. Cleaves cruciform DNA by making single-stranded nicks across the HJ at symmetrical positions within the homologous arms, yielding a 5'-phosphate and a 3'-hydroxyl group; requires a central core of homology in the junction. The consensus cleavage sequence is 5'-(A/T)TT(C/G)-3'. Cleavage occurs on the 3'-side of the TT dinucleotide at the point of strand exchange. HJ branch migration catalyzed by RuvA-RuvB allows RuvC to scan DNA until it finds its consensus sequence, where it cleaves and resolves the cruciform DNA. The polypeptide is Crossover junction endodeoxyribonuclease RuvC (Photorhabdus laumondii subsp. laumondii (strain DSM 15139 / CIP 105565 / TT01) (Photorhabdus luminescens subsp. laumondii)).